A 598-amino-acid polypeptide reads, in one-letter code: UvrABC system protein C (598 aa).

The region spanning 14–91 (DSPGCYLHKD…IQKNMPKYNI (78 aa)) is the GIY-YIG domain. The 36-residue stretch at 196–231 (DKIIEDLRSKMLAASEEMAFERAAEYRDLISGIATM) folds into the UVR domain.

The protein belongs to the UvrC family. Interacts with UvrB in an incision complex.

The protein localises to the cytoplasm. In terms of biological role, the UvrABC repair system catalyzes the recognition and processing of DNA lesions. UvrC both incises the 5' and 3' sides of the lesion. The N-terminal half is responsible for the 3' incision and the C-terminal half is responsible for the 5' incision. In Streptococcus pyogenes serotype M28 (strain MGAS6180), this protein is UvrABC system protein C.